A 2362-amino-acid chain; its full sequence is Filaggrin-2 (2362 aa).

An S-100-like region spans residues 1-81 (MAYLLRSVVT…TEFILMIFKL (81 aa)). 2 EF-hand domains span residues 8–43 (VVTI…EFRP) and 49–84 (DDPD…LALA). Residues aspartate 62, aspartate 64, aspartate 66, arginine 68, and glutamate 73 each contribute to the Ca(2+) site. 2 disordered regions span residues 96 to 238 (ASGS…GLSC) and 284 to 2109 (GCCR…SSIP). Positions 111–120 (EESETEEEEE) are enriched in acidic residues. Composition is skewed to basic and acidic residues over residues 159-174 (KRLE…EESR) and 189-214 (NKEK…PSRE). Filaggrin repeat units lie at residues 261–308 (GYNT…NQSC) and 373–414 (HSSC…SNGF). Composition is skewed to polar residues over residues 284–317 (GCCR…CQSG), 342–375 (SCSQ…SHSS), and 383–395 (GATQ…QQRM). The span at 396–411 (SSCGHSSSSHQKGCSS) shows a compositional bias: low complexity. Polar residues-rich tracts occupy residues 421-443 (ASGS…SSGF) and 450-469 (SGQS…SGYS). 3 stretches are compositionally biased toward low complexity: residues 474 to 519 (GSGQ…QSSG), 539 to 550 (GSRQSSGSEQHG), and 567 to 580 (SQSS…SGSQ). Residues 555–607 (QSSGSGKHETGPSQSSSSGHHGSGSQQHGGGSGQSTGFGEHESSSGHSSSSGQ) form a Filaggrin 3 repeat. Residues 581–590 (QHGGGSGQST) show a composition bias toward gly residues. A compositionally biased stretch (low complexity) spans 599-618 (SGHSSSSGQHRSGSRHSSGS). Gly residues predominate over residues 632-653 (GHHGSGSQQHGGGSGNSTGFGE). The span at 654 to 675 (HGSSSHPLPSSGQNESSSGQSS) shows a compositional bias: low complexity. A Filaggrin 4 repeat occupies 672 to 723 (GQSSRSERHGTGSGQSSGFGQHGSGSHQSSSSGHNEYGSGQTSSSWPHGKGS). The segment covering 682 to 694 (TGSGQSSGFGQHG) has biased composition (gly residues). 3 stretches are compositionally biased toward low complexity: residues 695–705 (SGSHQSSSSGH), 728–754 (GYGE…QSSS), and 780–798 (GYGE…WQHG). The segment covering 826–838 (TGSGQSLGFGQHG) has biased composition (gly residues). The span at 846–864 (SSGHYESVSEPSSSSWQHG) shows a compositional bias: low complexity. The Filaggrin 5 repeat unit spans residues 880–927 (HGQSSSAWNHGNESGQSNGYGEHESGHGQSSSAWNHGNESGQSNGFGE). Polar residues-rich tracts occupy residues 886–896 (AWNHGNESGQS) and 912–925 (AWNH…SNGF). Residues 973–982 (ESSEGEEHSV) show a composition bias toward basic and acidic residues. One copy of the Filaggrin 6 repeat lies at 984 to 1035 (PRRYSGYGHGQGQAGHQQRESGYGQRGRPQGPSQDSSRQPQAGHGQPSQSGY). Residues 1014 to 1035 (GPSQDSSRQPQAGHGQPSQSGY) are compositionally biased toward polar residues. Positions 1047–1059 (EYSEGEAHSEVSQ) are enriched in basic and acidic residues. Over residues 1067 to 1077 (CHCHCHGQARH) the composition is skewed to basic residues. Low complexity predominate over residues 1104–1121 (GPGQPSQSGSRRSPRSQP). Residues 1142–1152 (SGHGHGQGQGQ) show a composition bias toward gly residues. Residues 1162–1174 (HGQQGRPQGPSQD) are compositionally biased toward polar residues. The Filaggrin 7 repeat unit spans residues 1165–1210 (QGRPQGPSQDSSRQPQAGQGQPSQSGSGRSPRRSPVHPESSEGEEH). A compositionally biased stretch (low complexity) spans 1175-1193 (SSRQPQAGQGQPSQSGSGR). A phosphoserine mark is found at serine 1198, serine 1204, and serine 1205. The span at 1220-1232 (SGHGHGQGQGQGQ) shows a compositional bias: gly residues. The segment covering 1255–1273 (SSRQPQAGQGQPSQSGSGR) has biased composition (low complexity). Serine 1278, serine 1284, and serine 1285 each carry phosphoserine. Residues 1280–1334 (VHPESSEGEEHSVVPQRHSGSGHGHGQGQGQAGHQQRESVHGQPVRPEVPTQDSS) form a Filaggrin 8 repeat. A compositionally biased stretch (gly residues) spans 1300–1310 (SGHGHGQGQGQ). A compositionally biased stretch (low complexity) spans 1333 to 1351 (SSRQPQAGQGQPSQSGSGR). Phosphoserine is present on residues serine 1356, serine 1362, and serine 1363. The span at 1377–1396 (ESCHCHCHDQAGHQQRESVH) shows a compositional bias: basic and acidic residues. The span at 1413–1436 (PQAGPGQPSQSGSRRSPRSSPVHP) shows a compositional bias: low complexity. Phosphoserine is present on residues serine 1438 and serine 1439. Gly residues predominate over residues 1454–1464 (SGHGHGQGQGQ). Residues 1474–1522 (HGQRGRPQGPTQDSSRQPQAGQGQPSQSGSGRSPRRSPVHPESSEGEEH) form a Filaggrin 9 repeat. The segment covering 1487 to 1505 (SSRQPQAGQGQPSQSGSGR) has biased composition (low complexity). 3 positions are modified to phosphoserine: serine 1510, serine 1516, and serine 1517. Residues 1532–1544 (SGHGHGHGQGQGQ) show a composition bias toward gly residues. The span at 1567-1585 (SSRQPQAGQGQPSQSGSGR) shows a compositional bias: low complexity. Phosphoserine occurs at positions 1590, 1596, and 1597. Composition is skewed to low complexity over residues 1643-1661 (SSRQ…GSGR) and 1683-1696 (QRHS…GQGQ). The span at 1698-1708 (HAEHQQRESVH) shows a compositional bias: basic and acidic residues. A Filaggrin 10 repeat occupies 1723-1756 (RQPQAGQGQPSLSGSGRSPRRSPVHPESSEGEEH). Over residues 1724–1739 (QPQAGQGQPSLSGSGR) the composition is skewed to low complexity. Phosphoserine occurs at positions 1744, 1750, 1751, 1824, 1830, and 1831. The span at 1801–1825 (SSRQPQAGQGQPSQSGSGRSPGRSP) shows a compositional bias: low complexity. Basic and acidic residues predominate over residues 1829-1848 (ESSEGEEHSVVPQRHSESGH). Residues 1879–1897 (SSRQPQAGQGQPSQSGSGR) show a composition bias toward low complexity. Residues serine 1902, serine 1908, and serine 1909 each carry the phosphoserine modification. Residues 1924-1934 (SGHGHGQGQGQ) are compositionally biased toward gly residues. The span at 1949–1975 (RPQGPSQDSSSQPQASQGQPSQSGSGR) shows a compositional bias: low complexity. Residues serine 1980, serine 1986, and serine 1987 each carry the phosphoserine modification. Residues 2002 to 2012 (SGHGHGQGQGQ) are compositionally biased toward gly residues. The stretch at 2016–2070 (QQRESLHGQRGRSQSPFHPSHSIHWQSKCTISKKSSRLSGHYGRNHFQSTISGNQ) is one Filaggrin 11 repeat. 3 stretches are compositionally biased toward polar residues: residues 2026–2048 (GRSQ…TISK), 2061–2079 (HFQS…SSRH), and 2100–2109 (LRSNSQSSIP). Serine 2104 carries the phosphoserine modification. Residues 2218–2259 (DDSQYILFQKHLESPSFGNQSGFSPNERQLYTCNESIDSYHL) form a Filaggrin 12 repeat.

Belongs to the S100-fused protein family. The protein in the N-terminal section; belongs to the S-100 family. In terms of processing, deiminated by PADI1, PADI2 or PADI3 in vitro. The deiminated form is degraded by calpain-1/CAPN1 more quickly and into shorter peptides than the intact protein. May be processed by calpain-1/CAPN1.

The protein resides in the cytoplasm. The protein localises to the cytoplasmic granule. Functionally, essential for normal cell-cell adhesion in the cornified cell layers. Important for proper integrity and mechanical strength of the stratum corneum of the epidermis. The sequence is that of Filaggrin-2 (Flg2) from Mus musculus (Mouse).